The primary structure comprises 203 residues: Holliday junction branch migration complex subunit RuvA (203 aa).

The segment at methionine 1 to leucine 63 is domain I. The domain II stretch occupies residues serine 64–lysine 142. Residues aspartate 143–glycine 149 form a flexible linker region. Residues isoleucine 150–phenylalanine 203 are domain III.

The protein belongs to the RuvA family. As to quaternary structure, homotetramer. Forms an RuvA(8)-RuvB(12)-Holliday junction (HJ) complex. HJ DNA is sandwiched between 2 RuvA tetramers; dsDNA enters through RuvA and exits via RuvB. An RuvB hexamer assembles on each DNA strand where it exits the tetramer. Each RuvB hexamer is contacted by two RuvA subunits (via domain III) on 2 adjacent RuvB subunits; this complex drives branch migration. In the full resolvosome a probable DNA-RuvA(4)-RuvB(12)-RuvC(2) complex forms which resolves the HJ.

It localises to the cytoplasm. In terms of biological role, the RuvA-RuvB-RuvC complex processes Holliday junction (HJ) DNA during genetic recombination and DNA repair, while the RuvA-RuvB complex plays an important role in the rescue of blocked DNA replication forks via replication fork reversal (RFR). RuvA specifically binds to HJ cruciform DNA, conferring on it an open structure. The RuvB hexamer acts as an ATP-dependent pump, pulling dsDNA into and through the RuvAB complex. HJ branch migration allows RuvC to scan DNA until it finds its consensus sequence, where it cleaves and resolves the cruciform DNA. This Rickettsia bellii (strain OSU 85-389) protein is Holliday junction branch migration complex subunit RuvA.